The primary structure comprises 366 residues: Tubulin-like protein CetZ (366 aa).

GTP is bound by residues 10 to 14, 103 to 105, Glu136, Asn163, and Asn181; these read QCGTK and GTG.

It belongs to the CetZ family.

It is found in the cytoplasm. Involved in cell shape control. This is Tubulin-like protein CetZ from Pyrococcus furiosus (strain ATCC 43587 / DSM 3638 / JCM 8422 / Vc1).